Here is a 757-residue protein sequence, read N- to C-terminus: Inhibitor of nuclear factor kappa-B kinase subunit beta (757 aa).

Residues 15–300 (WEMKERLGTG…DPQYGPNGCF (286 aa)) enclose the Protein kinase domain. ATP is bound by residues 21-29 (LGTGGFGNV) and lysine 44. Aspartate 145 (proton acceptor) is an active-site residue. Lysine 163 participates in a covalent cross-link: Glycyl lysine isopeptide (Lys-Gly) (interchain with G-Cter in ubiquitin). Serine 177 is modified (phosphoserine; by TBK1 and PKC/PRKCZ). Cysteine 179 is modified (S-nitrosocysteine). Serine 181 is subject to Phosphoserine; by TBK1, PKC/PRKCZ and PDPK1. Proline 191 bears the Hydroxyproline mark. Positions 458–479 (LLRNNSCLSKMKNAMASTAQQL) are leucine-zipper. A Phosphoserine; by autocatalysis modification is found at serine 670. Serine 672 is subject to Phosphoserine. Phosphoserine; by autocatalysis occurs at positions 675, 682, 689, 692, 697, 705, 733, and 740. The disordered stretch occupies residues 683–703 (HPGQLMSQPSSACDSLPESDK). The segment at 737-742 (LDWSWL) is NEMO-binding.

This sequence belongs to the protein kinase superfamily. Ser/Thr protein kinase family. I-kappa-B kinase subfamily. As to quaternary structure, component of the I-kappa-B-kinase (IKK) core complex consisting of CHUK, IKBKB and IKBKG; probably four alpha/CHUK-beta/IKBKB dimers are associated with four gamma/IKBKG subunits. The IKK core complex seems to associate with regulatory or adapter proteins to form a IKK-signalosome holo-complex. The IKK complex associates with TERF2IP/RAP1, leading to promote IKK-mediated phosphorylation of RELA/p65. Part of a complex composed of NCOA2, NCOA3, CHUK/IKKA, IKBKB, IKBKG and CREBBP. Part of a 70-90 kDa complex at least consisting of CHUK/IKKA, IKBKB, NFKBIA, RELA, ELP1 and MAP3K14. Found in a membrane raft complex, at least composed of BCL10, CARD11, DPP4 and IKBKB. Interacts with SQSTM1 through PRKCZ or PRKCI. Forms an NGF-induced complex with IKBKB, PRKCI and TRAF6. May interact with MAVS/IPS1. Interacts with NALP2. Interacts with TICAM1. Interacts with FAF1; the interaction disrupts the IKK complex formation. Interacts with ATM. Part of a ternary complex consisting of TANK, IKBKB and IKBKG. Interacts with NIBP; the interaction is direct. Interacts with ARRB1 and ARRB2. Interacts with TRIM21. Interacts with NLRC5; prevents IKBKB phosphorylation and kinase activity. Interacts with PDPK1. Interacts with EIF2AK2/PKR. The phosphorylated form interacts with PPM1A and PPM1B. Interacts with ZNF268 isoform 2; the interaction is further increased in a TNF-alpha-dependent manner. Interacts with IKBKE. Interacts with ZC3H12A. Interacts with AKAP13. Interacts with LRRC14; disrupts IKBKB-IKBKG interaction preventing I-kappa-B-kinase (IKK) core complex formation and leading to a decrease of IKBKB phosphorylation and NF-kappaB activation. Interacts with SASH1. Interacts with ARFIP2. Interacts with FKBP5. Interacts with kinase TBK1; the complex interacts with STAT1, leading to phosphorylation of STAT1 on 'Thr-748' by IKBKB. Post-translationally, upon cytokine stimulation, phosphorylated on Ser-177 and Ser-181 by MEKK1 and/or MAP3K14/NIK as well as TBK1 and PRKCZ; which enhances activity. Phosphorylated by MAP3K7/TAK1 in response to NOD1 and NOD2 signaling, promoting activation and phosphorylation of NF-kappa-B inhibitors, leading to NF-kappa-B activation. Once activated, autophosphorylates on the C-terminal serine cluster; which decreases activity and prevents prolonged activation of the inflammatory response. Phosphorylated by the IKK-related kinases TBK1 and IKBKE, which is associated with reduced CHUK/IKKA and IKBKB activity and NF-kappa-B-dependent gene transcription. Dephosphorylated at Ser-177 and Ser-181 by PPM1A and PPM1B. In terms of processing, ubiquitinated. Monoubiquitination involves TRIM21 that leads to inhibition of Tax-induced NF-kappa-B signaling. 'Ser-163' may not serve as a monoubiquitination site. Ubiquitination on 'Ser-163' may modulate phosphorylation on C-terminal serine residues. Hydroxylated by PHD1/EGLN2, loss of hydroxylation under hypoxic conditions results in activation of NF-kappa-B. Detected in heart (at protein level). Expressed in liver, kidney and spleen.

The protein resides in the cytoplasm. It is found in the nucleus. The protein localises to the membrane raft. The catalysed reaction is L-seryl-[I-kappa-B protein] + ATP = O-phospho-L-seryl-[I-kappa-B protein] + ADP + H(+). It carries out the reaction L-seryl-[protein] + ATP = O-phospho-L-seryl-[protein] + ADP + H(+). The enzyme catalyses L-threonyl-[protein] + ATP = O-phospho-L-threonyl-[protein] + ADP + H(+). In terms of biological role, serine kinase that plays an essential role in the NF-kappa-B signaling pathway which is activated by multiple stimuli such as inflammatory cytokines, bacterial or viral products, DNA damages or other cellular stresses. Acts as a part of the canonical IKK complex in the conventional pathway of NF-kappa-B activation. Phosphorylates inhibitors of NF-kappa-B on 2 critical serine residues. These modifications allow polyubiquitination of the inhibitors and subsequent degradation by the proteasome. In turn, free NF-kappa-B is translocated into the nucleus and activates the transcription of hundreds of genes involved in immune response, growth control, or protection against apoptosis. In addition to the NF-kappa-B inhibitors, phosphorylates several other components of the signaling pathway including NEMO/IKBKG, NF-kappa-B subunits RELA and NFKB1, as well as IKK-related kinases TBK1 and IKBKE. IKK-related kinase phosphorylations may prevent the overproduction of inflammatory mediators since they exert a negative regulation on canonical IKKs. Phosphorylates FOXO3, mediating the TNF-dependent inactivation of this pro-apoptotic transcription factor. Also phosphorylates other substrates including NAA10, NCOA3, BCL10 and IRS1. Phosphorylates RIPK1 at 'Ser-25' which represses its kinase activity and consequently prevents TNF-mediated RIPK1-dependent cell death. Phosphorylates the C-terminus of IRF5, stimulating IRF5 homodimerization and translocation into the nucleus. Following bacterial lipopolysaccharide (LPS)-induced TLR4 endocytosis, phosphorylates STAT1 at 'Thr-748' which restricts interferon signaling and anti-inflammatory responses and promotes innate inflammatory responses. IKBKB-mediated phosphorylation of STAT1 at 'Thr-748' promotes binding of STAT1 to the ARID5A promoter, resulting in transcriptional activation of ARID5A and subsequent ARID5A-mediated stabilization of IL6. It also promotes binding of STAT1 to the IL12B promoter and activation of IL12B transcription. In Mus musculus (Mouse), this protein is Inhibitor of nuclear factor kappa-B kinase subunit beta (Ikbkb).